The sequence spans 367 residues: Probable butyrate kinase (367 aa).

Belongs to the acetokinase family.

The protein localises to the cytoplasm. It carries out the reaction butanoate + ATP = butanoyl phosphate + ADP. This is Probable butyrate kinase from Bacillus cereus (strain ZK / E33L).